The sequence spans 356 residues: Tyrosine recombinase XerS (356 aa).

In terms of domain architecture, Core-binding (CB) spans 16 to 121; it reads IMPWYVLDYY…ALSSLYKYLT (106 aa). The region spanning 169–354 is the Tyr recombinase domain; that stretch reads AFLDYVDKEY…VNDEQKNALD (186 aa). Catalysis depends on residues arginine 210, lysine 234, histidine 306, arginine 309, and histidine 332. Residue tyrosine 341 is the O-(3'-phospho-DNA)-tyrosine intermediate of the active site.

The protein belongs to the 'phage' integrase family. XerS subfamily.

It is found in the cytoplasm. FtsK is required for recombination. In terms of biological role, site-specific tyrosine recombinase, which acts by catalyzing the cutting and rejoining of the recombining DNA molecules. Essential to convert dimers of the bacterial chromosome into monomers to permit their segregation at cell division. The chain is Tyrosine recombinase XerS from Streptococcus equi subsp. equi (strain 4047).